The chain runs to 223 residues: Serine/threonine/tyrosine-interacting protein (223 aa).

The Tyrosine-protein phosphatase domain maps to 28–176; that stretch reads EMQEILPGLF…LQEYEAIYLA (149 aa). The Interaction with FBXW7 motif lies at 76–78; sequence FQQ. S184, S193, and S201 each carry phosphoserine. The segment at 197–223 is disordered; that stretch reads GTTGSLKRTHEEEDDFGTMQVATAQNG.

It belongs to the protein-tyrosine phosphatase family. Non-receptor class subfamily. In terms of assembly, interacts with MAPK1; independently of MAPK1 phosphorylation status. Interacts with CARHSP1/Crhsp-24. Interacts (via FQQ motif) with FBXW7 isoforms 1 (via F-box domain) and 3 (via F-box domain); the interaction is direct and prevents FBXW7 interaction with SKP1, a component of the SCF(FBXW7) complex. Does not interact with FBXW7 isoform 2.

The protein resides in the nucleus. Its subcellular location is the cytoplasm. The protein localises to the cytosol. Functionally, catalytically inactive phosphatase. Acts as a nuclear anchor for MAPK1/MAPK3 (ERK1/ERK2). Modulates cell-fate decisions and cell migration by spatiotemporal regulation of MAPK1/MAPK3 (ERK1/ERK2). By binding to the F-box of FBXW7, prevents the assembly of FBXW7 into the SCF E3 ubiquitin-protein ligase complex, and thereby inhibits degradation of its substrates. Plays a role in spermatogenesis. This Homo sapiens (Human) protein is Serine/threonine/tyrosine-interacting protein.